Reading from the N-terminus, the 184-residue chain is Ribosome-recycling factor (184 aa).

Belongs to the RRF family.

It localises to the cytoplasm. Responsible for the release of ribosomes from messenger RNA at the termination of protein biosynthesis. May increase the efficiency of translation by recycling ribosomes from one round of translation to another. The chain is Ribosome-recycling factor from Leptospira borgpetersenii serovar Hardjo-bovis (strain JB197).